Consider the following 365-residue polypeptide: NAD(P)H-quinone oxidoreductase subunit 1, chloroplastic (365 aa).

6 helical membrane passes run 30–50 (LVPI…IVWL), 104–124 (IAVI…HFVL), 129–149 (IGVF…LMSG), 253–273 (FGLF…FVAV), 302–322 (VFGT…FLFI), and 338–358 (LLNL…LLTT).

It belongs to the complex I subunit 1 family. NDH is composed of at least 16 different subunits, 5 of which are encoded in the nucleus.

Its subcellular location is the plastid. The protein localises to the chloroplast thylakoid membrane. The enzyme catalyses a plastoquinone + NADH + (n+1) H(+)(in) = a plastoquinol + NAD(+) + n H(+)(out). It carries out the reaction a plastoquinone + NADPH + (n+1) H(+)(in) = a plastoquinol + NADP(+) + n H(+)(out). NDH shuttles electrons from NAD(P)H:plastoquinone, via FMN and iron-sulfur (Fe-S) centers, to quinones in the photosynthetic chain and possibly in a chloroplast respiratory chain. The immediate electron acceptor for the enzyme in this species is believed to be plastoquinone. Couples the redox reaction to proton translocation, and thus conserves the redox energy in a proton gradient. The polypeptide is NAD(P)H-quinone oxidoreductase subunit 1, chloroplastic (Populus trichocarpa (Western balsam poplar)).